Consider the following 121-residue polypeptide: MLNKKEQRLRRSRQTRARIALQGVERLTVFRTNLHIYASVISADGGKVLASASTAEKEVRAQLGVAGKGACVDAAQLIGKRIAERAKAAGVEKVAFDRSGFAYHGRVKALAEAAREAGLQF.

Belongs to the universal ribosomal protein uL18 family. As to quaternary structure, part of the 50S ribosomal subunit; part of the 5S rRNA/L5/L18/L25 subcomplex. Contacts the 5S and 23S rRNAs.

Functionally, this is one of the proteins that bind and probably mediate the attachment of the 5S RNA into the large ribosomal subunit, where it forms part of the central protuberance. The protein is Large ribosomal subunit protein uL18 of Leptothrix cholodnii (strain ATCC 51168 / LMG 8142 / SP-6) (Leptothrix discophora (strain SP-6)).